We begin with the raw amino-acid sequence, 304 residues long: Methionyl-tRNA formyltransferase (304 aa).

S107–P110 contacts (6S)-5,6,7,8-tetrahydrofolate.

Belongs to the Fmt family.

It catalyses the reaction L-methionyl-tRNA(fMet) + (6R)-10-formyltetrahydrofolate = N-formyl-L-methionyl-tRNA(fMet) + (6S)-5,6,7,8-tetrahydrofolate + H(+). Its function is as follows. Attaches a formyl group to the free amino group of methionyl-tRNA(fMet). The formyl group appears to play a dual role in the initiator identity of N-formylmethionyl-tRNA by promoting its recognition by IF2 and preventing the misappropriation of this tRNA by the elongation apparatus. This is Methionyl-tRNA formyltransferase from Coprothermobacter proteolyticus (strain ATCC 35245 / DSM 5265 / OCM 4 / BT).